Reading from the N-terminus, the 428-residue chain is Dual-specificity RNA methyltransferase RlmN (428 aa).

Residues 1–17 show a composition bias toward basic and acidic residues; sequence MPLHRVEALGEPQDRTG. The disordered stretch occupies residues 1–44; the sequence is MPLHRVEALGEPQDRTGKTFSGRTNGPISSPLTDTERRMSIPQN. Polar residues predominate over residues 18–33; sequence KTFSGRTNGPISSPLT. Glutamate 136 acts as the Proton acceptor in catalysis. The Radical SAM core domain occupies 142–381; that stretch reads EDDRGALCVS…APIRMPRGRD (240 aa). An intrachain disulfide couples cysteine 149 to cysteine 386. 3 residues coordinate [4Fe-4S] cluster: cysteine 156, cysteine 160, and cysteine 163. S-adenosyl-L-methionine-binding positions include 212-213, serine 244, 266-268, and asparagine 343; these read GE and SLH. The S-methylcysteine intermediate role is filled by cysteine 386.

The protein belongs to the radical SAM superfamily. RlmN family. The cofactor is [4Fe-4S] cluster.

It is found in the cytoplasm. The catalysed reaction is adenosine(2503) in 23S rRNA + 2 reduced [2Fe-2S]-[ferredoxin] + 2 S-adenosyl-L-methionine = 2-methyladenosine(2503) in 23S rRNA + 5'-deoxyadenosine + L-methionine + 2 oxidized [2Fe-2S]-[ferredoxin] + S-adenosyl-L-homocysteine. It catalyses the reaction adenosine(37) in tRNA + 2 reduced [2Fe-2S]-[ferredoxin] + 2 S-adenosyl-L-methionine = 2-methyladenosine(37) in tRNA + 5'-deoxyadenosine + L-methionine + 2 oxidized [2Fe-2S]-[ferredoxin] + S-adenosyl-L-homocysteine. In terms of biological role, specifically methylates position 2 of adenine 2503 in 23S rRNA and position 2 of adenine 37 in tRNAs. m2A2503 modification seems to play a crucial role in the proofreading step occurring at the peptidyl transferase center and thus would serve to optimize ribosomal fidelity. The sequence is that of Dual-specificity RNA methyltransferase RlmN from Rhodospirillum rubrum (strain ATCC 11170 / ATH 1.1.1 / DSM 467 / LMG 4362 / NCIMB 8255 / S1).